We begin with the raw amino-acid sequence, 458 residues long: Argininosuccinate lyase (458 aa).

The protein belongs to the lyase 1 family. Argininosuccinate lyase subfamily.

It localises to the cytoplasm. It carries out the reaction 2-(N(omega)-L-arginino)succinate = fumarate + L-arginine. Its pathway is amino-acid biosynthesis; L-arginine biosynthesis; L-arginine from L-ornithine and carbamoyl phosphate: step 3/3. The protein is Argininosuccinate lyase of Geobacter metallireducens (strain ATCC 53774 / DSM 7210 / GS-15).